Reading from the N-terminus, the 294-residue chain is Thymidylate synthase (294 aa).

DUMP is bound by residues R30 and 156 to 157; that span reads RR. Catalysis depends on C176, which acts as the Nucleophile. Residues 196-199, N207, and 237-239 contribute to the dUMP site; these read RSGD and HVY. D199 is a (6R)-5,10-methylene-5,6,7,8-tetrahydrofolate binding site. Position 293 (A293) interacts with (6R)-5,10-methylene-5,6,7,8-tetrahydrofolate.

This sequence belongs to the thymidylate synthase family. As to quaternary structure, homodimer.

The enzyme catalyses dUMP + (6R)-5,10-methylene-5,6,7,8-tetrahydrofolate = 7,8-dihydrofolate + dTMP. It functions in the pathway pyrimidine metabolism; dTTP biosynthesis. This is Thymidylate synthase from Ascaris suum (Pig roundworm).